The chain runs to 235 residues: Orotidine 5'-phosphate decarboxylase (235 aa).

Substrate-binding positions include Asp-17, Lys-39, 66 to 75 (DMKLLDIDHT), Thr-121, Arg-182, Gln-191, and Arg-212. Lys-68 serves as the catalytic Proton donor.

This sequence belongs to the OMP decarboxylase family. Type 1 subfamily. In terms of assembly, homodimer.

The enzyme catalyses orotidine 5'-phosphate + H(+) = UMP + CO2. It functions in the pathway pyrimidine metabolism; UMP biosynthesis via de novo pathway; UMP from orotate: step 2/2. Functionally, catalyzes the decarboxylation of orotidine 5'-monophosphate (OMP) to uridine 5'-monophosphate (UMP). This is Orotidine 5'-phosphate decarboxylase from Bartonella bacilliformis.